A 275-amino-acid polypeptide reads, in one-letter code: 2,3,4,5-tetrahydropyridine-2,6-dicarboxylate N-succinyltransferase (275 aa).

Positions 106 and 143 each coordinate substrate.

It belongs to the transferase hexapeptide repeat family. Homotrimer.

It is found in the cytoplasm. The enzyme catalyses (S)-2,3,4,5-tetrahydrodipicolinate + succinyl-CoA + H2O = (S)-2-succinylamino-6-oxoheptanedioate + CoA. It functions in the pathway amino-acid biosynthesis; L-lysine biosynthesis via DAP pathway; LL-2,6-diaminopimelate from (S)-tetrahydrodipicolinate (succinylase route): step 1/3. The chain is 2,3,4,5-tetrahydropyridine-2,6-dicarboxylate N-succinyltransferase from Burkholderia mallei (strain NCTC 10247).